Reading from the N-terminus, the 328-residue chain is Homeobox protein Hox-D1 (328 aa).

The Antp-type hexapeptide signature appears at 204 to 209 (TFEWMK). The segment at residues 229 to 288 (SSAIRTNFSTKQLTELEKEFHFNKYLTRARRIEIANCLHLNDTQVKIWFQNRRMKQKKRE) is a DNA-binding region (homeobox). Residues 305 to 328 (PLSGTTPTKFIKNPGSPSQSQEPS) form a disordered region. Residues 319–328 (GSPSQSQEPS) are compositionally biased toward polar residues.

This sequence belongs to the Antp homeobox family. Labial subfamily.

The protein localises to the nucleus. Sequence-specific transcription factor which is part of a developmental regulatory system that provides cells with specific positional identities on the anterior-posterior axis. Acts on the anterior body structures. This chain is Homeobox protein Hox-D1 (HOXD1), found in Homo sapiens (Human).